An 884-amino-acid chain; its full sequence is Receptor-like protein 39 (884 aa).

The N-terminal stretch at 1-24 (MSELLFRLNFLLLLLLSCVSLASS) is a signal peptide. The Extracellular portion of the chain corresponds to 25 to 847 (FFSFNDPVVG…EEEEQVLNWK (823 aa)). 3 N-linked (GlcNAc...) asparagine glycosylation sites follow: N59, N71, and N92. 10 LRR repeats span residues 98 to 122 (FHQL…EFGM), 124 to 146 (NKLE…SFSN), 147 to 170 (LSML…VRNL), 171 to 196 (RKLT…LFEL), 197 to 223 (HNLA…NLNK), 225 to 245 (ELLD…ISNL), 246 to 268 (TQLT…VQNL), 269 to 292 (TKLS…LFTM), 294 to 318 (FLSY…SLSS), and 320 to 344 (LENL…LINL). Residue N146 is glycosylated (N-linked (GlcNAc...) asparagine). 4 N-linked (GlcNAc...) asparagine glycosylation sites follow: N190, N208, N244, and N267. N-linked (GlcNAc...) asparagine glycosylation is found at N304 and N313. An LRR 11; degenerate repeat occupies 345 to 365 (KELHLSFLNTSYPINLKLFSS). N353 carries N-linked (GlcNAc...) asparagine glycosylation. LRR repeat units follow at residues 366–391 (LKYL…SYIP), 392–413 (STLE…ILKT), 414–438 (LPNL…LWSL), 440–463 (RLSS…ILVN), and 464–487 (SSVR…PLSV). The N-linked (GlcNAc...) asparagine glycan is linked to N403. N463 carries an N-linked (GlcNAc...) asparagine glycan. The stretch at 488–507 (NYFSARNNRYGGDIPLSICS) is one LRR 17; degenerate repeat. LRR repeat units follow at residues 508-529 (RRSL…PPCP), 530-553 (SNFL…YYAD), 554-577 (APLR…LLNC), 579-601 (ALQF…LKAL), 602-625 (PKLQ…NQGS), 628-652 (FPEL…FFEN), 702-725 (SSSA…IGLL), 726-749 (KALI…LANL), 750-773 (KKIE…IGTL), and 775-798 (FLAY…QITG). N520 carries an N-linked (GlcNAc...) asparagine glycan. A glycan (N-linked (GlcNAc...) asparagine) is linked at N576. The N-linked (GlcNAc...) asparagine glycan is linked to N732. N780 carries an N-linked (GlcNAc...) asparagine glycan. The chain crosses the membrane as a helical span at residues 848-868 (GVGIGYGVGVLLGLAIAQLIA). Residues 869–884 (SYKPEWLVFLFQSRNH) lie on the Cytoplasmic side of the membrane.

This sequence belongs to the RLP family.

The protein resides in the cell membrane. This chain is Receptor-like protein 39, found in Arabidopsis thaliana (Mouse-ear cress).